Consider the following 538-residue polypeptide: UNC93-like protein (538 aa).

A glycan (N-linked (GlcNAc...) asparagine) is linked at Asn45. The next 5 helical transmembrane spans lie at 46-66 (ISIISIAFMVQFTAFQGTANL), 80-100 (SLSAIYAALVVSCIFLPTLII), 105-125 (VKWTLVCSMLCYAPYIAFQLF), 128-148 (FYTLVPAGILVGMGAAPMWAS), and 170-190 (AIIVRFFGFFFLAWQSAELWG). Asn210 carries an N-linked (GlcNAc...) asparagine glycan. Helical transmembrane passes span 244 to 264 (IFEISMIYLSCIVAAVCIIAF), 305 to 325 (LLIPITVFIGMEQAFIGADFT), 338 to 358 (IGFVMICFGVVNALCSILFGS), 366 to 386 (TPIIVLGAVVHFTLITVELFW), 394 to 414 (IIFYAMSGLWGVGDAVWQTQI), 435 to 455 (LWESAGFVIAYAYATTLCTQM), and 457 to 477 (LYILLAVLTLGCIGYVIVEIL).

Belongs to the unc-93 family.

Its subcellular location is the membrane. This Drosophila melanogaster (Fruit fly) protein is UNC93-like protein.